Here is a 194-residue protein sequence, read N- to C-terminus: Cation channel sperm-associated auxiliary subunit zeta (194 aa).

Component of the CatSper complex or CatSpermasome composed of the core pore-forming members CATSPER1, CATSPER2, CATSPER3 and CATSPER4 as well as auxiliary members CATSPERB, CATSPERG2, CATSPERD, CATSPERE, CATSPERZ, C2CD6/CATSPERT, SLCO6C1, TMEM249, TMEM262 and EFCAB9. HSPA1 may be an additional auxiliary complex member. The core complex members CATSPER1, CATSPER2, CATSPER3 and CATSPER4 form a heterotetrameric channel. The auxiliary CATSPERB, CATSPERG2, CATSPERD and CATSPERE subunits form a pavilion-like structure over the pore which stabilizes the complex through interactions with CATSPER4, CATSPER3, CATSPER1 and CATSPER2 respectively. SLCO6C1 interacts with CATSPERE and TMEM262/CATSPERH interacts with CATSPERB, further stabilizing the complex. C2CD6/CATSPERT interacts at least with CATSPERD and is required for targeting the CatSper complex in the flagellar membrane. Interacts with EFCAB9; the interaction is direct, Ca(2+)-dependent and connects EFCAB9 with the CatSper complex. Dissociates from EFCAB9 at elevated pH. In terms of tissue distribution, testis-specific. Expressed in adult but not in fetal testis. Not expressed in ovary. Within testis, expression is restricted to spermatids.

Its subcellular location is the cell projection. It localises to the cilium. The protein resides in the flagellum membrane. Its function is as follows. Auxiliary component of the CatSper complex, a complex involved in sperm cell hyperactivation. Sperm cell hyperactivation is needed for sperm motility which is essential late in the preparation of sperm for fertilization. Required for a distribution of the CatSper complex in linear quadrilateral nanodomains along the flagellum, maximizing fertilization inside the mammalian female reproductive tract. Together with EFCAB9, associates with the CatSper channel pore and is required for the two-row structure of each single CatSper channel. The polypeptide is Cation channel sperm-associated auxiliary subunit zeta (Mus musculus (Mouse)).